The primary structure comprises 387 residues: Phosphoglycerate kinase (387 aa).

Substrate-binding positions include 21 to 23 (DLN), R36, 59 to 62 (HLGR), R113, and R146. ATP-binding positions include K197, E314, and 340 to 343 (GGDT).

The protein belongs to the phosphoglycerate kinase family. As to quaternary structure, monomer.

It localises to the cytoplasm. It carries out the reaction (2R)-3-phosphoglycerate + ATP = (2R)-3-phospho-glyceroyl phosphate + ADP. It participates in carbohydrate degradation; glycolysis; pyruvate from D-glyceraldehyde 3-phosphate: step 2/5. The protein is Phosphoglycerate kinase of Pseudomonas syringae pv. tomato (strain ATCC BAA-871 / DC3000).